Consider the following 127-residue polypeptide: Holo-[acyl-carrier-protein] synthase (127 aa).

Asp-9 and Glu-58 together coordinate Mg(2+).

The protein belongs to the P-Pant transferase superfamily. AcpS family. Requires Mg(2+) as cofactor.

It is found in the cytoplasm. It carries out the reaction apo-[ACP] + CoA = holo-[ACP] + adenosine 3',5'-bisphosphate + H(+). Its function is as follows. Transfers the 4'-phosphopantetheine moiety from coenzyme A to a Ser of acyl-carrier-protein. This chain is Holo-[acyl-carrier-protein] synthase, found in Shewanella baltica (strain OS223).